The sequence spans 204 residues: Sperm acrosome developmental regulator (204 aa).

Serine 65 carries the phosphoserine modification. A compositionally biased stretch (basic residues) spans 172-184; it reads RRQERRRRHHLRA. The tract at residues 172 to 204 is disordered; the sequence is RRQERRRRHHLRAHMGPQPDPAQGLKQDARSPL.

The protein localises to the cytoplasmic vesicle. It is found in the secretory vesicle. Its subcellular location is the acrosome. Functionally, may play an important role in acrosome formation and nucleus shaping during spermiogenesis. The sequence is that of Sperm acrosome developmental regulator (SPACDR) from Bos taurus (Bovine).